Here is a 1581-residue protein sequence, read N- to C-terminus: Rho guanine nucleotide exchange factor 5 (1581 aa).

Disordered regions lie at residues 25 to 54 (EGIM…TDGH), 159 to 274 (VSKE…EQKQ), 316 to 643 (LRDS…RDGI), 659 to 700 (SEEF…PPTV), 741 to 810 (HSHP…PEFY), and 829 to 1051 (VPII…GSSD). The span at 41 to 54 (QEDRDPSYKWTDGH) shows a compositional bias: basic and acidic residues. Residues 204 to 221 (KQLQLEATQENQGQEGFL) are compositionally biased toward polar residues. The segment covering 228-241 (GLEEQEGQEVEIQE) has biased composition (acidic residues). 2 stretches are compositionally biased toward basic and acidic residues: residues 326–336 (QESREVEERRV) and 345–380 (RLVE…DSGD). The residue at position 446 (S446) is a Phosphoserine. Positions 474 to 492 (LDNRTHNSQQEEFRLRKGI) are enriched in basic and acidic residues. A compositionally biased stretch (polar residues) spans 496-507 (SASTSVAPSGTR). Residues 515-531 (PNVFSSTATLSPVSSSV) show a composition bias toward low complexity. Composition is skewed to polar residues over residues 569–595 (TSDT…NSFP), 603–613 (TPDSLGMSLSF), 662–685 (FTSN…QNSA), 748–760 (TLSS…SKGS), and 779–791 (TPES…TSIP). The span at 829–843 (VPIIDPSSEPPPLPP) shows a compositional bias: pro residues. Polar residues-rich tracts occupy residues 867–881 (PNNQ…SVGR), 889–905 (GRST…NNEV), and 912–925 (SNMT…SPTT). S953 and S969 each carry phosphoserine. Positions 975 to 986 (KNSEKPLHHQLE) are enriched in basic and acidic residues. Residues S1029 and S1110 each carry the phosphoserine modification. A DH domain is found at 1158 to 1342 (KLQEAKFELI…EKLIRDCNSN (185 aa)). The 114-residue stretch at 1375-1488 (LVKSGELTAL…SALAMPREEL (114 aa)) folds into the PH domain. In terms of domain architecture, SH3 spans 1494-1555 (YDSPQVQCLR…PVQQVEFISN (62 aa)).

In terms of assembly, interacts with SRC. Forms a ternary complex with SRC and the PI3K 85 kDa subunit. Interacts with and is activated by the heterodimer formed by GNB1 and GNG2. Interacts with ODAM (via C-terminus). Interacts with RHOA. Post-translationally, activation of SRC induces tyrosine phosphorylation of ARHGEF5.

The protein localises to the nucleus. The protein resides in the cytoplasm. It localises to the cell projection. Its subcellular location is the podosome. Guanine nucleotide exchange factor which activates Rho GTPases. Strongly activates RHOA. Also strongly activates RHOB, weakly activates RHOC and RHOG and shows no effect on RHOD, RHOV, RHOQ or RAC1. Involved in regulation of cell shape and actin cytoskeletal organization. Plays a role in actin organization by generating a loss of actin stress fibers and the formation of membrane ruffles and filopodia. Required for SRC-induced podosome formation. Involved in positive regulation of immature dendritic cell migration. The protein is Rho guanine nucleotide exchange factor 5 of Mus musculus (Mouse).